We begin with the raw amino-acid sequence, 493 residues long: L-arabinose isomerase 1 (493 aa).

Glu301, Glu326, His343, and His442 together coordinate Mn(2+).

This sequence belongs to the arabinose isomerase family. It depends on Mn(2+) as a cofactor.

The catalysed reaction is beta-L-arabinopyranose = L-ribulose. The protein operates within carbohydrate degradation; L-arabinose degradation via L-ribulose; D-xylulose 5-phosphate from L-arabinose (bacterial route): step 1/3. Functionally, catalyzes the conversion of L-arabinose to L-ribulose. The protein is L-arabinose isomerase 1 of Bacillus licheniformis (strain ATCC 14580 / DSM 13 / JCM 2505 / CCUG 7422 / NBRC 12200 / NCIMB 9375 / NCTC 10341 / NRRL NRS-1264 / Gibson 46).